A 262-amino-acid polypeptide reads, in one-letter code: Flap endonuclease Xni (262 aa).

Position 105 (D105) interacts with Mg(2+). One can recognise a 5'-3' exonuclease domain in the interval E162–L254. Positions 172, 173, 181, 183, and 186 each coordinate K(+). Residues G185–S190 form an interaction with DNA region.

It belongs to the Xni family. Requires Mg(2+) as cofactor. K(+) serves as cofactor.

Functionally, has flap endonuclease activity. During DNA replication, flap endonucleases cleave the 5'-overhanging flap structure that is generated by displacement synthesis when DNA polymerase encounters the 5'-end of a downstream Okazaki fragment. The sequence is that of Flap endonuclease Xni from Shewanella baltica (strain OS195).